Reading from the N-terminus, the 104-residue chain is Type VII secretion system extracellular protein B (104 aa).

This sequence belongs to the WXG100 family. Homodimer. When mixed with EsxA does not form heterodimers. Forms heterodimers with EsxD.

It is found in the secreted. Its function is as follows. Virulence factor that is important for the establishment of infection in the host. EsxB is required for EsxA synthesis as well as secretion. Mediates together with EsxA the release of S.aureus from the host cell. Also inhibits host cytokine production and thus modulates dendritic cell-mediated immunity. The sequence is that of Type VII secretion system extracellular protein B from Staphylococcus aureus (strain USA300).